We begin with the raw amino-acid sequence, 511 residues long: 2,3-bisphosphoglycerate-independent phosphoglycerate mutase (511 aa).

Mn(2+)-binding residues include Asp12 and Ser62. Ser62 serves as the catalytic Phosphoserine intermediate. Residues His123, 152-153 (RD), Arg184, Arg190, 259-262 (RADR), and Lys333 each bind substrate. The Mn(2+) site is built by Asp401, His405, Asp442, His443, and His460.

This sequence belongs to the BPG-independent phosphoglycerate mutase family. In terms of assembly, monomer. It depends on Mn(2+) as a cofactor.

It catalyses the reaction (2R)-2-phosphoglycerate = (2R)-3-phosphoglycerate. Its pathway is carbohydrate degradation; glycolysis; pyruvate from D-glyceraldehyde 3-phosphate: step 3/5. Functionally, catalyzes the interconversion of 2-phosphoglycerate and 3-phosphoglycerate. In Nitratidesulfovibrio vulgaris (strain ATCC 29579 / DSM 644 / CCUG 34227 / NCIMB 8303 / VKM B-1760 / Hildenborough) (Desulfovibrio vulgaris), this protein is 2,3-bisphosphoglycerate-independent phosphoglycerate mutase.